Consider the following 509-residue polypeptide: Cobyric acid synthase (509 aa).

Residues 262-459 (EIKVGIIKLP…IHGIFENDNW (198 aa)) form the GATase cobBQ-type domain. Cys343 (nucleophile) is an active-site residue. The active site involves His451.

This sequence belongs to the CobB/CobQ family. CobQ subfamily.

It functions in the pathway cofactor biosynthesis; adenosylcobalamin biosynthesis. Catalyzes amidations at positions B, D, E, and G on adenosylcobyrinic A,C-diamide. NH(2) groups are provided by glutamine, and one molecule of ATP is hydrogenolyzed for each amidation. This is Cobyric acid synthase from Prochlorococcus marinus (strain AS9601).